A 276-amino-acid chain; its full sequence is Large ribosomal subunit protein uL2 (276 aa).

Disordered stretches follow at residues 30-57 and 219-276; these read EKSLTEKLSKKGGRNNQGRLTVRHQGGG and TVRG…RSKK.

It belongs to the universal ribosomal protein uL2 family. Part of the 50S ribosomal subunit. Forms a bridge to the 30S subunit in the 70S ribosome.

Its function is as follows. One of the primary rRNA binding proteins. Required for association of the 30S and 50S subunits to form the 70S ribosome, for tRNA binding and peptide bond formation. It has been suggested to have peptidyltransferase activity; this is somewhat controversial. Makes several contacts with the 16S rRNA in the 70S ribosome. The sequence is that of Large ribosomal subunit protein uL2 from Exiguobacterium sibiricum (strain DSM 17290 / CCUG 55495 / CIP 109462 / JCM 13490 / 255-15).